A 198-amino-acid chain; its full sequence is Outer-membrane lipoprotein carrier protein (198 aa).

The N-terminal stretch at 1–17 (MKKFLFSLCLLSSTVLA) is a signal peptide.

Belongs to the LolA family. In terms of assembly, monomer.

It localises to the periplasm. Participates in the translocation of lipoproteins from the inner membrane to the outer membrane. Only forms a complex with a lipoprotein if the residue after the N-terminal Cys is not an aspartate (The Asp acts as a targeting signal to indicate that the lipoprotein should stay in the inner membrane). The polypeptide is Outer-membrane lipoprotein carrier protein (Aliivibrio fischeri (strain MJ11) (Vibrio fischeri)).